Reading from the N-terminus, the 206-residue chain is Small ribosomal subunit protein eS1 (206 aa).

This sequence belongs to the eukaryotic ribosomal protein eS1 family.

The protein is Small ribosomal subunit protein eS1 of Natronomonas pharaonis (strain ATCC 35678 / DSM 2160 / CIP 103997 / JCM 8858 / NBRC 14720 / NCIMB 2260 / Gabara) (Halobacterium pharaonis).